Here is a 242-residue protein sequence, read N- to C-terminus: Immunity protein TsiV2 (242 aa).

3 consecutive transmembrane segments (helical) span residues 39–59, 66–86, and 118–138; these read VFGA…FADI, FWGF…LFMP, and FAWV…PLAF.

The protein localises to the host membrane. Functionally, immunity protein that plays a role in preventing early activation of toxin VasX. The polypeptide is Immunity protein TsiV2 (Vibrio cholerae serotype O1 (strain ATCC 39315 / El Tor Inaba N16961)).